The following is a 752-amino-acid chain: Protein WEAK CHLOROPLAST MOVEMENT UNDER BLUE LIGHT-like 2 (752 aa).

Residue S143 is modified to Phosphoserine. Coiled coils occupy residues E186 to S557 and E596 to M651. The segment at K476–C495 is disordered. Residues K653–N675 show a composition bias toward basic and acidic residues. Residues K653–R733 form a disordered region. A compositionally biased stretch (polar residues) spans K690 to P723.

It belongs to the WEB family.

This is Protein WEAK CHLOROPLAST MOVEMENT UNDER BLUE LIGHT-like 2 (WEL2) from Arabidopsis thaliana (Mouse-ear cress).